Here is a 938-residue protein sequence, read N- to C-terminus: ATP-dependent RNA helicase DDX42 (938 aa).

A compositionally biased stretch (gly residues) spans 1–18 (MNWNKGGPGTKRGFGFGG). The disordered stretch occupies residues 1–114 (MNWNKGGPGT…KPVDSDSDDD (114 aa)). Lys-5 bears the N6-acetyllysine mark. Arg-12 is subject to Omega-N-methylarginine. The span at 35–52 (SHSAFGATSSSSGFGKSA) shows a compositional bias: low complexity. Ser-58 is modified (phosphoserine). Positions 70-84 (DEENAYFEDEEEDSS) are enriched in acidic residues. Residues Ser-96, Ser-104, Ser-109, and Ser-111 each carry the phosphoserine modification. The stretch at 116 to 157 (LEAFMAEVEDQAARDMKRLEEKDKERKNVKGIRDDIEEEDDQ) forms a coiled coil. The tract at residues 182 to 203 (EYDSDGNPIAPTKKIIDPLPPI) is disordered. Ser-185 is modified (phosphoserine). Residues 253-281 (SSFAHFGFDEQLMHQIRKSEYTQPTPIQC) carry the Q motif motif. A Helicase ATP-binding domain is found at 284 to 459 (VPVALSGRDM…RDILIDPIRV (176 aa)). 297–304 (AKTGSGKT) contacts ATP. The DEAD box signature appears at 407–410 (DEAD). Residues 487 to 632 (WLTRRLVEFT…HVSKELLDLA (146 aa)) enclose the Helicase C-terminal domain. Polar residues-rich tracts occupy residues 737–757 (LNSV…SPVT) and 786–798 (GVNN…NSRE). Positions 737–938 (LNSVPTNSAQ…PKRKKSRWDS (202 aa)) are disordered. Residues 738 to 833 (NSVPTNSAQQ…TGNRHSDSPR (96 aa)) are necessary for interaction with TP53BP2. Residue Ser-754 is modified to Phosphoserine. Residues 820-920 (SHGETGNRHS…KVDSKTDKTA (101 aa)) show a composition bias toward basic and acidic residues. Lys-899 is covalently cross-linked (Glycyl lysine isopeptide (Lys-Gly) (interchain with G-Cter in SUMO2)).

Belongs to the DEAD box helicase family. DDX42 subfamily. In terms of assembly, transient component of the SF3B subcomplex of the 17S U2 SnRNP complex. Interacts (via the C-terminus) with TP53BP2; the interaction is not inhibitied by TP53BP2 ubiquitination and is independent of p53/TP53. Expressed in several cell lines (at protein level). Expressed in liver, lung, tonsil, thymus, muscle and pancreatic islets.

The protein resides in the cytoplasm. The protein localises to the nucleus. It is found in the cajal body. It localises to the nucleus speckle. It catalyses the reaction ATP + H2O = ADP + phosphate + H(+). In terms of biological role, ATP-dependent RNA helicase that binds to partially double-stranded RNAs (dsRNAs) in order to unwind RNA secondary structures. Unwinding is promoted in the presence of single-strand binding proteins. Also mediates RNA duplex formation thereby displacing the single-strand RNA binding protein. ATP and ADP modulate its activity: ATP binding and hydrolysis by DDX42 triggers RNA strand separation, whereas the ADP-bound form of the protein triggers annealing of complementary RNA strands. Required for assembly of the 17S U2 SnRNP complex of the spliceosome, a large ribonucleoprotein complex that removes introns from transcribed pre-mRNAs: DDX42 associates transiently with the SF3B subcomplex of the 17S U2 SnRNP complex and is released after fulfilling its role in the assembly of 17S U2 SnRNP. Involved in the survival of cells by interacting with TP53BP2 and thereby counteracting the apoptosis-stimulating activity of TP53BP2. Relocalizes TP53BP2 to the cytoplasm. The sequence is that of ATP-dependent RNA helicase DDX42 from Homo sapiens (Human).